Reading from the N-terminus, the 295-residue chain is Ribosomal protein L11 methyltransferase (295 aa).

Threonine 145, glycine 166, aspartate 188, and asparagine 230 together coordinate S-adenosyl-L-methionine.

Belongs to the methyltransferase superfamily. PrmA family.

It localises to the cytoplasm. The enzyme catalyses L-lysyl-[protein] + 3 S-adenosyl-L-methionine = N(6),N(6),N(6)-trimethyl-L-lysyl-[protein] + 3 S-adenosyl-L-homocysteine + 3 H(+). Functionally, methylates ribosomal protein L11. This is Ribosomal protein L11 methyltransferase from Pectobacterium atrosepticum (strain SCRI 1043 / ATCC BAA-672) (Erwinia carotovora subsp. atroseptica).